A 173-amino-acid polypeptide reads, in one-letter code: Crossover junction endodeoxyribonuclease RuvC (173 aa).

Active-site residues include Asp8, Glu67, and Asp139. Mg(2+) is bound by residues Asp8, Glu67, and Asp139.

This sequence belongs to the RuvC family. Homodimer which binds Holliday junction (HJ) DNA. The HJ becomes 2-fold symmetrical on binding to RuvC with unstacked arms; it has a different conformation from HJ DNA in complex with RuvA. In the full resolvosome a probable DNA-RuvA(4)-RuvB(12)-RuvC(2) complex forms which resolves the HJ. The cofactor is Mg(2+).

Its subcellular location is the cytoplasm. The catalysed reaction is Endonucleolytic cleavage at a junction such as a reciprocal single-stranded crossover between two homologous DNA duplexes (Holliday junction).. The RuvA-RuvB-RuvC complex processes Holliday junction (HJ) DNA during genetic recombination and DNA repair. Endonuclease that resolves HJ intermediates. Cleaves cruciform DNA by making single-stranded nicks across the HJ at symmetrical positions within the homologous arms, yielding a 5'-phosphate and a 3'-hydroxyl group; requires a central core of homology in the junction. The consensus cleavage sequence is 5'-(A/T)TT(C/G)-3'. Cleavage occurs on the 3'-side of the TT dinucleotide at the point of strand exchange. HJ branch migration catalyzed by RuvA-RuvB allows RuvC to scan DNA until it finds its consensus sequence, where it cleaves and resolves the cruciform DNA. In Baumannia cicadellinicola subsp. Homalodisca coagulata, this protein is Crossover junction endodeoxyribonuclease RuvC.